The following is a 79-amino-acid chain: MGIKKTSATVFLVIILTISFSYYDVEAESVIEPAKYGACLFLCDARRDDHACFYDCTNVAIYRTGHCVGNPPRCCCIRG.

A signal peptide spans 1-27; that stretch reads MGIKKTSATVFLVIILTISFSYYDVEA. 4 disulfide bridges follow: C39–C76, C43–C67, C52–C74, and C56–C75.

Belongs to the DEFL family.

Its subcellular location is the secreted. This Arabidopsis thaliana (Mouse-ear cress) protein is Defensin-like protein 54.